A 103-amino-acid polypeptide reads, in one-letter code: Integration host factor subunit alpha (103 aa).

This sequence belongs to the bacterial histone-like protein family. As to quaternary structure, heterodimer of an alpha and a beta chain.

Its function is as follows. This protein is one of the two subunits of integration host factor, a specific DNA-binding protein that functions in genetic recombination as well as in transcriptional and translational control. In Bartonella bacilliformis (strain ATCC 35685 / KC583 / Herrer 020/F12,63), this protein is Integration host factor subunit alpha.